The chain runs to 931 residues: Transportin (931 aa).

19 HEAT repeats span residues glycine 10–aspartate 37, valine 42–glutamate 79, tyrosine 88–phenylalanine 121, leucine 127–aspartate 164, asparagine 171–isoleucine 201, phenylalanine 214–valine 241, lysine 253–alanine 280, proline 296–isoleucine 421, valine 430–alanine 459, serine 471–arginine 498, leucine 512–alanine 545, leucine 553–valine 586, glutamate 594–glycine 632, serine 640–threonine 693, leucine 704–leucine 735, proline 743–proline 776, valine 784–proline 819, aspartate 827–asparagine 860, and valine 869–methionine 900. Positions isoleucine 32–aspartate 99 constitute an Importin N-terminal domain. Positions aspartate 317–glutamate 401 are disordered. The segment covering aspartate 358–asparagine 381 has biased composition (low complexity). Over residues asparagine 382 to glutamate 401 the composition is skewed to acidic residues.

This sequence belongs to the importin beta family. Importin beta-2 subfamily. In terms of assembly, forms a complex with an importin alpha subunit.

The protein resides in the cytoplasm. It is found in the nucleus envelope. Functionally, functions in nuclear protein import via a substrate-importin alpha-beta transport complex that passes though the nuclear pore complexes (NPC). Mediates docking of the substrate-importin complex to distinct nucleoporins. This is Transportin (tnpo) from Dictyostelium discoideum (Social amoeba).